The sequence spans 123 residues: Dormancy-associated protein homolog 4 (123 aa).

The interval 7–86 (LWDETVAGPT…NPGTPLTPGT (80 aa)) is disordered. The segment covering 30 to 46 (LSTVRSSPPSLSSDQVT) has biased composition (low complexity). 2 stretches are compositionally biased toward polar residues: residues 47–58 (RSIMVTKGNNNV) and 71–80 (PTCSSSNPGT). S74 carries the post-translational modification Phosphoserine.

The protein belongs to the DRM1/ARP family.

This Arabidopsis thaliana (Mouse-ear cress) protein is Dormancy-associated protein homolog 4.